The chain runs to 303 residues: Large ribosomal subunit protein uL1m (303 aa).

It belongs to the universal ribosomal protein uL1 family. In terms of assembly, component of the mitochondrial large ribosomal subunit (mt-LSU). Mature N.crassa 74S mitochondrial ribosomes consist of a small (37S) and a large (54S) subunit. The 37S small subunit contains a 16S ribosomal RNA (16S mt-rRNA) and 32 different proteins. The 54S large subunit contains a 23S rRNA (23S mt-rRNA) and 42 different proteins.

It localises to the mitochondrion. Its function is as follows. Component of the mitochondrial ribosome (mitoribosome), a dedicated translation machinery responsible for the synthesis of mitochondrial genome-encoded proteins, including at least some of the essential transmembrane subunits of the mitochondrial respiratory chain. The mitoribosomes are attached to the mitochondrial inner membrane and translation products are cotranslationally integrated into the membrane. In Neurospora crassa (strain ATCC 24698 / 74-OR23-1A / CBS 708.71 / DSM 1257 / FGSC 987), this protein is Large ribosomal subunit protein uL1m (mrpl1).